The chain runs to 277 residues: 2-dehydro-3-deoxyphosphooctonate aldolase (277 aa).

The protein belongs to the KdsA family.

Its subcellular location is the cytoplasm. The catalysed reaction is D-arabinose 5-phosphate + phosphoenolpyruvate + H2O = 3-deoxy-alpha-D-manno-2-octulosonate-8-phosphate + phosphate. Its pathway is carbohydrate biosynthesis; 3-deoxy-D-manno-octulosonate biosynthesis; 3-deoxy-D-manno-octulosonate from D-ribulose 5-phosphate: step 2/3. It participates in bacterial outer membrane biogenesis; lipopolysaccharide biosynthesis. This Brucella abortus (strain S19) protein is 2-dehydro-3-deoxyphosphooctonate aldolase.